The sequence spans 242 residues: Small ribosomal subunit protein uS2 (242 aa).

It belongs to the universal ribosomal protein uS2 family.

The sequence is that of Small ribosomal subunit protein uS2 from Shewanella woodyi (strain ATCC 51908 / MS32).